The chain runs to 210 residues: Putative fructokinase-8 (210 aa).

This sequence belongs to the carbohydrate kinase PfkB family.

It carries out the reaction D-fructose + ATP = D-fructose 6-phosphate + ADP + H(+). It participates in glycan biosynthesis; starch biosynthesis. In terms of biological role, may play an important role in maintaining the flux of carbon towards starch formation. In Arabidopsis thaliana (Mouse-ear cress), this protein is Putative fructokinase-8.